Reading from the N-terminus, the 226-residue chain is UPF0173 metal-dependent hydrolase Tpet_1587 (226 aa).

The protein belongs to the UPF0173 family.

The sequence is that of UPF0173 metal-dependent hydrolase Tpet_1587 from Thermotoga petrophila (strain ATCC BAA-488 / DSM 13995 / JCM 10881 / RKU-1).